The chain runs to 427 residues: Glycophorin-binding protein-related antigen (427 aa).

GBP repeat units follow at residues 109–149 (LTSA…DELE), 150–189 (TSAD…DEVE), 190–229 (SSAD…DELE), 230–269 (TSAD…EVET), 270–307 (SADP…SEVE), 308–347 (TSAD…DELE), 348–387 (TSAD…DELE), and 388–427 (TSAD…DESS).

This Plasmodium falciparum (isolate FCBR / Columbia) protein is Glycophorin-binding protein-related antigen (GBPH).